We begin with the raw amino-acid sequence, 356 residues long: MFS-type transporter tazK (356 aa).

The next 9 helical transmembrane spans lie at 12–32, 42–62, 69–89, 102–122, 178–198, 211–231, 257–277, 288–308, and 320–340; these read LPFF…ALGH, FLGG…LADF, GVAV…GAIT, MTAW…FIIL, ILLS…LLFV, GAID…VGAF, LHPM…FAWT, ILAG…SLAY, and AISG…LFAP.

Belongs to the major facilitator superfamily. CAR1 family.

It localises to the membrane. MFS-type transporter; part of the gene cluster that mediates the biosynthesis of azaterrilone A and other azaphilones, a class of fungal metabolites characterized by a highly oxygenated pyrano-quinone bicyclic core and exhibiting a broad range of bioactivities. The protein is MFS-type transporter tazK of Aspergillus terreus (strain NIH 2624 / FGSC A1156).